The chain runs to 207 residues: MSYQENNAMPSIMDALVPMVVEQTSRGERSYDIYSRLLKERVIFLTGQVEDHMANLVVAQLLFLESENPDKDIFLYINSPGGSVTAGMSIYDTMQFIKPNVSTVCMGQACSMGAFLLAGGAPGKRYVLPNSRVMIHQPLGGFQGQASDIQIHAQEILTIKKKLNTLLAEHTGQPLEVIEKDTDRDNFMAADDAVKYGLVDAVLNKRD.

Ser-111 functions as the Nucleophile in the catalytic mechanism. His-136 is a catalytic residue.

The protein belongs to the peptidase S14 family. In terms of assembly, fourteen ClpP subunits assemble into 2 heptameric rings which stack back to back to give a disk-like structure with a central cavity, resembling the structure of eukaryotic proteasomes.

The protein resides in the cytoplasm. It carries out the reaction Hydrolysis of proteins to small peptides in the presence of ATP and magnesium. alpha-casein is the usual test substrate. In the absence of ATP, only oligopeptides shorter than five residues are hydrolyzed (such as succinyl-Leu-Tyr-|-NHMec, and Leu-Tyr-Leu-|-Tyr-Trp, in which cleavage of the -Tyr-|-Leu- and -Tyr-|-Trp bonds also occurs).. In terms of biological role, cleaves peptides in various proteins in a process that requires ATP hydrolysis. Has a chymotrypsin-like activity. Plays a major role in the degradation of misfolded proteins. The protein is ATP-dependent Clp protease proteolytic subunit of Aliivibrio salmonicida (strain LFI1238) (Vibrio salmonicida (strain LFI1238)).